A 150-amino-acid chain; its full sequence is Cytochrome b5 type B (150 aa).

Positions 1-15 are excised as a propeptide; sequence MSGSMATAEASGSDG. Residues 1-21 form a disordered region; that stretch reads MSGSMATAEASGSDGKGQEVE. Phosphoserine is present on Ser23. Positions 24 to 100 constitute a Cytochrome b5 heme-binding domain; sequence VTYYRMEEVA…LKQYYIGDIH (77 aa). Lys34 bears the N6-acetyllysine mark. Position 37 is a phosphoserine (Ser37). Residue Lys39 is modified to N6-methyllysine. Residues His59 and His83 each contribute to the heme site. Phosphoserine is present on Ser84. A helical transmembrane segment spans residues 122–144; sequence CWAYWILPIIGAVLLGFLYRYYT.

It belongs to the cytochrome b5 family. As to quaternary structure, component of a complex composed of cytochrome b5, NADH-cytochrome b5 reductase (CYB5R3) and MTARC2.

Its subcellular location is the mitochondrion outer membrane. In terms of biological role, cytochrome b5 is a membrane-bound hemoprotein functioning as an electron carrier for several membrane-bound oxygenases. The polypeptide is Cytochrome b5 type B (CYB5B) (Pongo abelii (Sumatran orangutan)).